The primary structure comprises 2262 residues: Protein Ycf2 (2262 aa).

1607 to 1614 (GFIGTGRS) lines the ATP pocket.

This sequence belongs to the Ycf2 family.

The protein resides in the plastid. Its subcellular location is the chloroplast stroma. Probable ATPase of unknown function. Its presence in a non-photosynthetic plant (Epifagus virginiana) and experiments in tobacco indicate that it has an essential function which is probably not related to photosynthesis. In Nuphar advena (Common spatterdock), this protein is Protein Ycf2.